Reading from the N-terminus, the 33-residue chain is Dermaseptin-J7 (33 aa).

Valine 33 is modified (valine amide).

In terms of tissue distribution, expressed by the skin glands.

The protein localises to the secreted. Has antimicrobial activity. This chain is Dermaseptin-J7, found in Phasmahyla jandaia (Jandaia leaf frog).